The following is a 476-amino-acid chain: MDDLRDTLMAYGCIAIRAGDFNGLNDFLEQECGTRLHVAWPERCFIQLRSRSALGPFVGKMGTVCSQGAYVCCQEYLHPFGFVEGPGFMRYQLIVLIGQRGGIYCYDDLRDCVYELAPTMKDFLRNGFRHRDHFHTMRDYQRPMVQYDDYWNAVMLYRGDVESLSAEVTKRGYASYTIDDPFDECPDTHFAFWTHNTEVMKFKETSFSVVRAGGSIQTMELMIRTVPRITCYHQLLGALGHEVPERKEFLVRQYVLVDTFGVVYGYDPAMDAVYRLAEDVVMFTCVMGKKGHRNHRFSGRREAIVRLEKTPTCQHPKKTPDPMIMFDEDDDDELSLPRNVMTHEEAESRLYDAITENLMHCVKLVTTDSPLATHLWPQELQALCDSPALSLCTDDVEGVRQKLRARTGSLHHFELSYRFHDEDPETYMGFLWDIPSCDRCVRRRRFKVCDVGRRHIIPGAANGMPPLTPPHVYMNN.

It belongs to the herpesviridae US22 family.

This is an uncharacterized protein from Homo sapiens (Human).